A 181-amino-acid chain; its full sequence is Oligoribonuclease (181 aa).

The Exonuclease domain occupies 8–171 (LIWIDMEMTG…ADIYDSIEEL (164 aa)). Tyr-129 is a catalytic residue.

Belongs to the oligoribonuclease family.

The protein localises to the cytoplasm. Its function is as follows. 3'-to-5' exoribonuclease specific for small oligoribonucleotides. The chain is Oligoribonuclease from Nitrosomonas europaea (strain ATCC 19718 / CIP 103999 / KCTC 2705 / NBRC 14298).